The chain runs to 267 residues: tRNA pseudouridine synthase A (267 aa).

Aspartate 51 acts as the Nucleophile in catalysis. A substrate-binding site is contributed by tyrosine 109.

It belongs to the tRNA pseudouridine synthase TruA family. As to quaternary structure, homodimer.

It catalyses the reaction uridine(38/39/40) in tRNA = pseudouridine(38/39/40) in tRNA. Its function is as follows. Formation of pseudouridine at positions 38, 39 and 40 in the anticodon stem and loop of transfer RNAs. The chain is tRNA pseudouridine synthase A from Staphylococcus epidermidis (strain ATCC 35984 / DSM 28319 / BCRC 17069 / CCUG 31568 / BM 3577 / RP62A).